The primary structure comprises 228 residues: Translin (228 aa).

Residues 86-90 are DNA/RNA binding; it reads RFHEH. The interval 177–198 is leucine-zipper; it reads LDSGFRLLNLKNDSLRKRYDGL. Lys187 bears the N6-acetyllysine mark. Residue Ser190 is modified to Phosphoserine. Lys199 is subject to N6-acetyllysine.

The protein belongs to the translin family. As to quaternary structure, ring-shaped heterooctamer of six TSN and two TSNAX subunits, DNA/RNA binding occurs inside the ring.

It is found in the cytoplasm. Its subcellular location is the nucleus. In terms of biological role, DNA-binding protein that specifically recognizes consensus sequences at the breakpoint junctions in chromosomal translocations, mostly involving immunoglobulin (Ig)/T-cell receptor gene segments. Seems to recognize single-stranded DNA ends generated by staggered breaks occurring at recombination hot spots. Functionally, exhibits both single-stranded and double-stranded endoribonuclease activity. May act as an activator of RNA-induced silencing complex (RISC) by facilitating endonucleolytic cleavage of the siRNA passenger strand. This is Translin (TSN) from Bos taurus (Bovine).